The sequence spans 159 residues: Ribosomal RNA large subunit methyltransferase H (159 aa).

Residues Leu76, Gly108, and 127–132 (FSKMTL) contribute to the S-adenosyl-L-methionine site.

Belongs to the RNA methyltransferase RlmH family. In terms of assembly, homodimer.

It localises to the cytoplasm. It catalyses the reaction pseudouridine(1915) in 23S rRNA + S-adenosyl-L-methionine = N(3)-methylpseudouridine(1915) in 23S rRNA + S-adenosyl-L-homocysteine + H(+). In terms of biological role, specifically methylates the pseudouridine at position 1915 (m3Psi1915) in 23S rRNA. This is Ribosomal RNA large subunit methyltransferase H from Bacillus anthracis (strain CDC 684 / NRRL 3495).